The sequence spans 1465 residues: DNA polymerase III PolC-type (1465 aa).

Residues 425-581 (YVVFDVETTG…YDAEATGRLL (157 aa)) enclose the Exonuclease domain.

The protein belongs to the DNA polymerase type-C family. PolC subfamily.

It localises to the cytoplasm. It catalyses the reaction DNA(n) + a 2'-deoxyribonucleoside 5'-triphosphate = DNA(n+1) + diphosphate. In terms of biological role, required for replicative DNA synthesis. This DNA polymerase also exhibits 3' to 5' exonuclease activity. The chain is DNA polymerase III PolC-type from Streptococcus mutans serotype c (strain ATCC 700610 / UA159).